The sequence spans 342 residues: Succinoglycan biosynthesis protein ExoU (342 aa).

Belongs to the glycosyltransferase 2 family.

It is found in the cytoplasm. Its pathway is glycan metabolism; exopolysaccharide biosynthesis. Its function is as follows. Glycosyltransferase required for the synthesis of succinoglycan (EPS I). Needed for the addition of the sixth sugar (glucose), catalyzes the formation of a beta-1,6 linkage between the fifth and sixth sugar. This chain is Succinoglycan biosynthesis protein ExoU (exoU), found in Rhizobium meliloti (strain 1021) (Ensifer meliloti).